The primary structure comprises 186 residues: 3-hydroxyanthranilate 3,4-dioxygenase (186 aa).

Arginine 44 contacts O2. 3 residues coordinate Fe cation: histidine 48, glutamate 54, and histidine 96. Glutamate 54 is a substrate binding site. Substrate contacts are provided by arginine 100 and glutamate 110. A divalent metal cation-binding residues include cysteine 125, cysteine 130, cysteine 164, and cysteine 167.

Belongs to the 3-HAO family. Fe(2+) is required as a cofactor.

It localises to the cytoplasm. It carries out the reaction 3-hydroxyanthranilate + O2 = (2Z,4Z)-2-amino-3-carboxymuconate 6-semialdehyde. Its pathway is cofactor biosynthesis; NAD(+) biosynthesis; quinolinate from L-kynurenine: step 3/3. Its function is as follows. Catalyzes the oxidative ring opening of 3-hydroxyanthranilate to 2-amino-3-carboxymuconate semialdehyde, which spontaneously cyclizes to quinolinate. The sequence is that of 3-hydroxyanthranilate 3,4-dioxygenase from Chaetomium globosum (strain ATCC 6205 / CBS 148.51 / DSM 1962 / NBRC 6347 / NRRL 1970) (Soil fungus).